The chain runs to 84 residues: Large ribosomal subunit protein bL27 (84 aa).

The tract at residues 1–25 (MAHKKAGGSSRNGRDSNGQRRGVKR) is disordered.

The protein belongs to the bacterial ribosomal protein bL27 family.

The protein is Large ribosomal subunit protein bL27 of Desulfatibacillum aliphaticivorans.